The following is a 116-amino-acid chain: G antigen 2A (116 aa).

The tract at residues methionine 1–cysteine 116 is disordered. 2 stretches are compositionally biased toward acidic residues: residues phenylalanine 31 to glutamate 44 and glutamate 86 to glutamate 95. Residues glutamate 102–cysteine 116 are compositionally biased toward basic and acidic residues.

This sequence belongs to the GAGE family.

The chain is G antigen 2A (GAGE2A) from Homo sapiens (Human).